The following is a 425-amino-acid chain: Histone-binding protein RBBP4 (425 aa).

The residue at position 2 (Ala-2) is an N-acetylalanine. Lys-4 carries the N6-acetyllysine; alternate modification. A Glycyl lysine isopeptide (Lys-Gly) (interchain with G-Cter in SUMO2); alternate cross-link involves residue Lys-4. Lys-4 participates in a covalent cross-link: Glycyl lysine isopeptide (Lys-Gly) (interchain with G-Cter in ubiquitin); alternate. WD repeat units follow at residues Tyr-32–Gly-125, Glu-126–Gly-175, His-176–Phe-223, Gly-225–Asp-270, Ala-271–Glu-314, Ser-315–Gly-371, and Gly-372–Met-404. At Ser-110 the chain carries Phosphoserine. At Lys-160 the chain carries N6-acetyllysine; alternate. Lys-160 is covalently cross-linked (Glycyl lysine isopeptide (Lys-Gly) (interchain with G-Cter in SUMO2); alternate). Phosphoserine is present on Ser-355.

It belongs to the WD repeat RBAP46/RBAP48/MSI1 family. Binds directly to helix 1 of the histone fold of histone H4, a region that is not accessible when H4 is in chromatin. Subunit of the chromatin assembly factor 1 (CAF-1) complex, which is composed of RBBP4, CHAF1B and CHAF1A. Subunit of the core histone deacetylase (HDAC) complex, which is composed of HDAC1, HDAC2, RBBP4 and RBBP7. The core HDAC complex associates with SIN3A, ARID4B/SAP180, SAP18, SAP30, SAP130, SUDS3/SAP45 and possibly ARID4A/RBP1 and ING1 to form the SIN3 HDAC complex. Component of the nucleosome remodeling and deacetylase (NuRD) repressor complex, composed of core proteins MTA1, MTA2, MTA3, RBBP4, RBBP7, HDAC1, HDAC2, MBD2, MBD3, and peripherally associated proteins CDK2AP1, CDK2AP2, GATAD2A, GATAD2B, CHD3, CHD4 and CHD5. The exact stoichiometry of the NuRD complex is unknown, and some subunits such as MBD2 and MBD3, GATAD2A and GATAD2B, and CHD3, CHD4 and CHD5 define mutually exclusive NuRD complexes. Interacts with ZNF512B; the interaction is direct and may play a role in repressing gene expression. The NuRD complex may also interact with MBD3L1 and MBD3L2. Component of the PRC2 complex, which consists of the core subunits EED, EZH1 or EZH2, SUZ12, and RBBP4, and various combinations of accessory subunits including AEBP2, JARID2, PHF19, MTF2 and EPOP. Forms a monomeric PRC2.2 (class 2) complex consisting of at least SUZ12, RBBP4, AEBP2 and JARID2. Forms a dimeric PRC2.1 (class 1, PRC-PCL) complex consisting of at least SUZ12, RBBP4, and PHF19; PHF19 stabilizes the dimeric structure which enhances PRC2 interaction with chromatin. Component of the NURF-1 ISWI chromatin remodeling complex (also called the nucleosome-remodeling factor (NURF) complex) at least composed of SMARCA1 (isoform 2), BPTF, RBBP4 and RBBP7. Within the complex interacts with isoform 2 of SMARCA1. Component of the BPFT-SMARCA1 complex at least composed of SMARCA1 (isoform 1), BPFT, RBBP4 and RBBP7; the complex is catalytically inactive and does not remodel chromatin. Within the complex interacts with isoform 1 of SMARCA1. Interacts with the ISWI chromatin remodeling complex component SMARCA5; the interaction is direct. Interacts with the viral protein-binding domain of the retinoblastoma protein (RB1). Component of the DREAM complex (also named LINC complex) at least composed of E2F4, E2F5, LIN9, LIN37, LIN52, LIN54, MYBL1, MYBL2, RBL1, RBL2, RBBP4, TFDP1 and TFDP2. The complex exists in quiescent cells where it represses cell cycle-dependent genes. It dissociates in S phase when LIN9, LIN37, LIN52 and LIN54 form a subcomplex that binds to MYBL2. Found in a complex composed of at least SINHCAF, SIN3A, HDAC1, SAP30, RBBP4, OGT and TET1. Interacts with ZNF827; the interaction is direct and recruits RBBP4 to telomeres. Interacts with MTA1; the interaction is direct and mutually exclusive with binding histone H4. Interacts with ARMC12 (via ARM domains). Interacts with BRCA1. Interacts with CDK2AP1. Interacts with CREBBP, and this interaction may be enhanced by the binding of phosphorylated CREB1 to CREBBP. Interacts with ERCC6. Interacts with HDAC7. Interacts with PHF6. Interacts with PWWP2B. Interacts with SPEN/MINT. Interacts with SUV39H1.

The protein resides in the nucleus. The protein localises to the chromosome. Its subcellular location is the telomere. Its function is as follows. Core histone-binding subunit that may target chromatin assembly factors, chromatin remodeling factors and histone deacetylases to their histone substrates in a manner that is regulated by nucleosomal DNA. Component of the chromatin assembly factor 1 (CAF-1) complex, which is required for chromatin assembly following DNA replication and DNA repair. Component of the core histone deacetylase (HDAC) complex, which promotes histone deacetylation and consequent transcriptional repression. Component of the nucleosome remodeling and histone deacetylase complex (the NuRD complex), which promotes transcriptional repression by histone deacetylation and nucleosome remodeling. Component of the PRC2 complex, which promotes repression of homeotic genes during development. Component of the NURF (nucleosome remodeling factor) complex. The polypeptide is Histone-binding protein RBBP4 (RBBP4) (Pongo abelii (Sumatran orangutan)).